A 90-amino-acid polypeptide reads, in one-letter code: MDHMSPRLRAFLSEPIGEKDVAWVDGISHELAINLVTKGFNKAYVLLGQFLLMHKREAEFQKWLICCCGATEFEARECSNCLKEWCSCFL.

The protein belongs to the BAF family. As to quaternary structure, homodimer. Heterodimerizes with BANF1.

The protein localises to the nucleus. It localises to the cytoplasm. In terms of biological role, may play a role in BANF1 regulation and influence tissue-specific roles of BANF1. In Bos taurus (Bovine), this protein is Barrier-to-autointegration factor-like protein (BANF2).